Consider the following 370-residue polypeptide: Anhydro-N-acetylmuramic acid kinase (370 aa).

ATP is bound at residue 12–19 (GTSLDGVD).

This sequence belongs to the anhydro-N-acetylmuramic acid kinase family.

It carries out the reaction 1,6-anhydro-N-acetyl-beta-muramate + ATP + H2O = N-acetyl-D-muramate 6-phosphate + ADP + H(+). It functions in the pathway amino-sugar metabolism; 1,6-anhydro-N-acetylmuramate degradation. Its pathway is cell wall biogenesis; peptidoglycan recycling. Its function is as follows. Catalyzes the specific phosphorylation of 1,6-anhydro-N-acetylmuramic acid (anhMurNAc) with the simultaneous cleavage of the 1,6-anhydro ring, generating MurNAc-6-P. Is required for the utilization of anhMurNAc either imported from the medium or derived from its own cell wall murein, and thus plays a role in cell wall recycling. This Pectobacterium carotovorum subsp. carotovorum (strain PC1) protein is Anhydro-N-acetylmuramic acid kinase.